A 725-amino-acid chain; its full sequence is Eukaryotic translation initiation factor 3 subunit B (725 aa).

Phosphoserine is present on Ser23. The 91-residue stretch at 39–129 (TVVVIEGAPV…HTFVVRKLNQ (91 aa)) folds into the RRM domain. Position 135 is a phosphoserine (Ser135). Thr136 carries the phosphothreonine modification. 3 WD repeats span residues 190–229 (DREN…MCAR), 304–344 (DGKK…LVDK), and 347–386 (IKID…QPAR). A coiled-coil region spans residues 630-671 (LTKEDMKKIRKKLKDYNRLFDEEDIAEQSSANRELAARRRQL).

It belongs to the eIF-3 subunit B family. Component of the eukaryotic translation initiation factor 3 (eIF-3) complex. The eIF-3 complex appears to include tif32/eif3a, SPAC25G10.08/eif3b, tif33/eif3c, SPBC4C3.07/eif3f, tif35/eif3g and sum1/eif3i. This set of common subunits may also associate exclusively with either moe1/eif3d and int6/eif3e, or with SPAC821.05/eif3h and SPAC1751.03/eif3m. The eIF-3 complex may also include SPAC3A12.13c/eif3j.

It is found in the cytoplasm. In terms of biological role, RNA-binding component of the eukaryotic translation initiation factor 3 (eIF-3) complex, which is involved in protein synthesis of a specialized repertoire of mRNAs and, together with other initiation factors, stimulates binding of mRNA and methionyl-tRNAi to the 40S ribosome. The eIF-3 complex specifically targets and initiates translation of a subset of mRNAs involved in cell proliferation. The chain is Eukaryotic translation initiation factor 3 subunit B from Schizosaccharomyces pombe (strain 972 / ATCC 24843) (Fission yeast).